We begin with the raw amino-acid sequence, 152 residues long: Large ribosomal subunit protein bL9 (152 aa).

It belongs to the bacterial ribosomal protein bL9 family.

Functionally, binds to the 23S rRNA. The chain is Large ribosomal subunit protein bL9 from Microcystis aeruginosa (strain NIES-843 / IAM M-2473).